A 348-amino-acid polypeptide reads, in one-letter code: S-adenosylmethionine:tRNA ribosyltransferase-isomerase (348 aa).

It belongs to the QueA family. Monomer.

Its subcellular location is the cytoplasm. It carries out the reaction 7-aminomethyl-7-carbaguanosine(34) in tRNA + S-adenosyl-L-methionine = epoxyqueuosine(34) in tRNA + adenine + L-methionine + 2 H(+). The protein operates within tRNA modification; tRNA-queuosine biosynthesis. Functionally, transfers and isomerizes the ribose moiety from AdoMet to the 7-aminomethyl group of 7-deazaguanine (preQ1-tRNA) to give epoxyqueuosine (oQ-tRNA). The polypeptide is S-adenosylmethionine:tRNA ribosyltransferase-isomerase (Tolumonas auensis (strain DSM 9187 / NBRC 110442 / TA 4)).